Reading from the N-terminus, the 387-residue chain is Structural protein ORF387 (387 aa).

Residues 315-387 (KTFQEMVKVA…EEKNNTVKLS (73 aa)) adopt a coiled-coil conformation. Positions 365-387 (LTEEQQQQNETEEEEKNNTVKLS) are disordered.

Its subcellular location is the virion. The sequence is that of Structural protein ORF387 from Acidianus convivator (ATV).